A 195-amino-acid polypeptide reads, in one-letter code: Neurturin (195 aa).

Positions 1–19 (MRRWKAAALVSLICSSLLS) are cleaved as a signal peptide. A propeptide spanning residues 20-95 (VWMCQEGLLL…RAGPRRRRAR (76 aa)) is cleaved from the precursor. 3 cysteine pairs are disulfide-bonded: C101–C163, C128–C192, and C132–C194. Heparan sulfate group-binding residues include R147, R156, and R158.

It belongs to the TGF-beta family. GDNF subfamily. As to quaternary structure, homodimer; disulfide-linked. Interacts with GFRA2 coreceptor and RET: forms a 2:2:2 ternary complex composed of NRTN ligand, GFRA2 and RET receptor. Also forms a 4:4:4 tetrameric complex composed of 4 copies of NRTN ligand, GFRA2 and RET receptor, which prevents endocytosis of RET. As to expression, widespread distribution.

The protein localises to the secreted. Growth factor that supports the survival of sympathetic neurons in culture. May regulate the development and maintenance of the CNS. Involved in the development of the neural crest. Might control the size of non-neuronal cell population such as haemopoietic cells. Acts by binding to its coreceptor, GFRA2, leading to autophosphorylation and activation of the RET receptor. Heparan sulfate-binding is required for signaling. This chain is Neurturin (Nrtn), found in Mus musculus (Mouse).